A 508-amino-acid chain; its full sequence is Adenylosuccinate synthetase 1, chloroplastic (508 aa).

The N-terminal 56 residues, 1-56, are a transit peptide targeting the chloroplast; sequence MNISILRLDSNPITTATSPATATANHRSGILGCYNGTYSCRLNQLQQRKKNPSIIV. Residues 95–101 and 123–125 contribute to the GTP site; these read GDEGKGK and GHT. Catalysis depends on Asp-96, which acts as the Proton acceptor. Mg(2+) is bound by residues Asp-96 and Gly-123. Residues 96 to 99, 121 to 124, Thr-213, Arg-227, Gln-307, Thr-322, and Arg-386 contribute to the IMP site; these read DEGK and NAGH. The active-site Proton donor is His-124. 382-388 lines the substrate pocket; the sequence is TTTGRPR. GTP is bound by residues Arg-388, 414–416, and 497–499; these read KLD and GIG.

This sequence belongs to the adenylosuccinate synthetase family. Homodimer. Requires Mg(2+) as cofactor.

It localises to the plastid. It is found in the chloroplast. It carries out the reaction IMP + L-aspartate + GTP = N(6)-(1,2-dicarboxyethyl)-AMP + GDP + phosphate + 2 H(+). The protein operates within purine metabolism; AMP biosynthesis via de novo pathway; AMP from IMP: step 1/2. Its function is as follows. Plays an important role in the de novo pathway and in the salvage pathway of purine nucleotide biosynthesis. Catalyzes the first committed step in the biosynthesis of AMP from IMP. The sequence is that of Adenylosuccinate synthetase 1, chloroplastic from Capsicum frutescens (Cayenne pepper).